A 92-amino-acid chain; its full sequence is MPRSLKKGPFVANHLLRKIEKMNGKGEKHVITTWSRASTIIPIMIGHTIAIHNGKSHLPIFINDRMIGHKLGEFVLTRNYRGHGKTDKKARR.

It belongs to the universal ribosomal protein uS19 family.

It is found in the plastid. It localises to the chloroplast. Functionally, protein S19 forms a complex with S13 that binds strongly to the 16S ribosomal RNA. The sequence is that of Small ribosomal subunit protein uS19c from Nephroselmis olivacea (Green alga).